We begin with the raw amino-acid sequence, 355 residues long: Protein HGH1 homolog (355 aa).

The segment at aspartate 324–isoleucine 355 is disordered. Acidic residues-rich tracts occupy residues glutamate 325 to glutamate 335 and glutamate 344 to isoleucine 355.

The protein belongs to the HGH1 family.

In Dictyostelium discoideum (Social amoeba), this protein is Protein HGH1 homolog.